We begin with the raw amino-acid sequence, 266 residues long: Undecaprenyl-diphosphatase (266 aa).

The next 8 helical transmembrane spans lie at 1 to 21 (MDTFQVIILALIQGLTEFLPI), 39 to 59 (QGLSFDVAVNTGSLFAVVIYF), 87 to 107 (WWIILATLPAVFFGFIAKDFI), 111 to 131 (LRSAGVIAVTTIVFGLLLWWA), 149 to 169 (ALLIGFAQALALIPGTSRSGA), 183 to 203 (AAARFSFLMSVPVSLGAAILV), 218 to 238 (ALTLGTVISFVAAYLCIHYFL), and 246 to 266 (MTPFVIYRLILGAVLCGFIFL).

Belongs to the UppP family.

Its subcellular location is the cell inner membrane. It carries out the reaction di-trans,octa-cis-undecaprenyl diphosphate + H2O = di-trans,octa-cis-undecaprenyl phosphate + phosphate + H(+). Catalyzes the dephosphorylation of undecaprenyl diphosphate (UPP). Confers resistance to bacitracin. This is Undecaprenyl-diphosphatase from Shewanella sp. (strain MR-7).